The following is a 206-amino-acid chain: BAG family molecular chaperone regulator 1B (206 aa).

The BAG domain occupies 122 to 202; the sequence is IEAYIDELQQ…QYLSKLDSTK (81 aa). Serine 144 is subject to Phosphoserine.

As to quaternary structure, binds to the ATPase domain of HSP70/HSC chaperones.

Its function is as follows. Inhibits the chaperone activity of HSP70/HSC70 by promoting substrate release. The polypeptide is BAG family molecular chaperone regulator 1B (bag102) (Schizosaccharomyces pombe (strain 972 / ATCC 24843) (Fission yeast)).